The chain runs to 360 residues: UDP-D-xylose:L-fucose alpha-1,3-D-xylosyltransferase MGP4 (360 aa).

The interval 1-25 (MAQQKFLHQRPIQNPFTNPFSSSPL) is disordered. Residues 1–41 (MAQQKFLHQRPIQNPFTNPFSSSPLSTSSISNRPISLLSRN) lie on the Cytoplasmic side of the membrane. Low complexity predominate over residues 14–25 (NPFTNPFSSSPL). A helical; Signal-anchor for type II membrane protein transmembrane segment spans residues 42–62 (GLLLLLALLVILGVFLPWAGS). Topologically, residues 63 to 360 (PLFPSPNKLS…ASESPLGKLE (298 aa)) are lumenal. Asparagine 93 and asparagine 168 each carry an N-linked (GlcNAc...) asparagine glycan. The short motif at 191-193 (DVD) is the DXD motif element. N-linked (GlcNAc...) asparagine glycans are attached at residues asparagine 285 and asparagine 310.

It belongs to the glycosyltransferase 77 family. Requires Mn(2+) as cofactor. Mg(2+) serves as cofactor. Widely expressed.

It is found in the golgi apparatus membrane. Its function is as follows. Catalyzes the transfer of D-xylose from UDP-alpha-D-xylose onto L-fucose. Probably involved in the biosynthesis of rhamnogalacturonan II (RG-II) through xylosylation of the internal fucose moiety of the A-chain of RG-II, a structurally complex pectic polysaccharide of the primary cell wall. RG-II is essential for the cell wall integrity of rapidly growing tissues such as roots and pollen tube growth and elongation. The protein is UDP-D-xylose:L-fucose alpha-1,3-D-xylosyltransferase MGP4 of Arabidopsis thaliana (Mouse-ear cress).